A 688-amino-acid polypeptide reads, in one-letter code: Elongation factor G (688 aa).

The tr-type G domain maps to 8 to 282; it reads KNFRNFGIMA…AVVDFLPSPV (275 aa). Residues 17-24, 81-85, and 135-138 contribute to the GTP site; these read AHIDAGKT, DTPGH, and NKMD.

Belongs to the TRAFAC class translation factor GTPase superfamily. Classic translation factor GTPase family. EF-G/EF-2 subfamily.

It localises to the cytoplasm. Its function is as follows. Catalyzes the GTP-dependent ribosomal translocation step during translation elongation. During this step, the ribosome changes from the pre-translocational (PRE) to the post-translocational (POST) state as the newly formed A-site-bound peptidyl-tRNA and P-site-bound deacylated tRNA move to the P and E sites, respectively. Catalyzes the coordinated movement of the two tRNA molecules, the mRNA and conformational changes in the ribosome. This is Elongation factor G (fusA) from Mycoplasma genitalium (strain ATCC 33530 / DSM 19775 / NCTC 10195 / G37) (Mycoplasmoides genitalium).